A 109-amino-acid chain; its full sequence is Flagellar hook-basal body complex protein FliE (109 aa).

It belongs to the FliE family.

It localises to the bacterial flagellum basal body. This is Flagellar hook-basal body complex protein FliE from Pseudomonas paraeruginosa (strain DSM 24068 / PA7) (Pseudomonas aeruginosa (strain PA7)).